The primary structure comprises 422 residues: Charged multivesicular body protein 7 (422 aa).

Residues 234–304 adopt a coiled-coil conformation; that stretch reads KLLSERLQSA…ERISAAETDR (71 aa). Residues 394 to 422 form a disordered region; the sequence is RPTEWKMDQAAHSPADGSFLRSVPEPMLQ.

Belongs to the SNF7 family.

Its subcellular location is the cytoplasm. It localises to the nucleus envelope. In terms of biological role, ESCRT-III-like protein required to recruit the ESCRT-III complex to the nuclear envelope during late anaphase. Together with SPAST, the ESCRT-III complex promotes nuclear envelope sealing and mitotic spindle disassembly during late anaphase. Plays a role in the endosomal sorting pathway. The sequence is that of Charged multivesicular body protein 7 (chmp7) from Xenopus laevis (African clawed frog).